The following is a 299-amino-acid chain: Coenzyme PQQ synthesis protein B (299 aa).

The protein belongs to the PqqB family.

It participates in cofactor biosynthesis; pyrroloquinoline quinone biosynthesis. Functionally, may be involved in the transport of PQQ or its precursor to the periplasm. This chain is Coenzyme PQQ synthesis protein B, found in Methylobacterium nodulans (strain LMG 21967 / CNCM I-2342 / ORS 2060).